The sequence spans 209 residues: Ribosomal RNA large subunit methyltransferase E (209 aa).

S-adenosyl-L-methionine contacts are provided by Gly63, Trp65, Asp83, Asp99, and Asp124. Lys164 acts as the Proton acceptor in catalysis.

This sequence belongs to the class I-like SAM-binding methyltransferase superfamily. RNA methyltransferase RlmE family.

Its subcellular location is the cytoplasm. The catalysed reaction is uridine(2552) in 23S rRNA + S-adenosyl-L-methionine = 2'-O-methyluridine(2552) in 23S rRNA + S-adenosyl-L-homocysteine + H(+). Its function is as follows. Specifically methylates the uridine in position 2552 of 23S rRNA at the 2'-O position of the ribose in the fully assembled 50S ribosomal subunit. This chain is Ribosomal RNA large subunit methyltransferase E, found in Yersinia pseudotuberculosis serotype O:1b (strain IP 31758).